Consider the following 320-residue polypeptide: Holliday junction branch migration complex subunit RuvB (320 aa).

The segment at 1–172 (MTANVCLDES…FGIISRLEYY (172 aa)) is large ATPase domain (RuvB-L). ATP contacts are provided by residues Arg-12, Gly-53, Lys-56, Thr-57, Thr-58, 119–121 (EDF), Arg-162, Tyr-172, and Arg-209. Residue Thr-57 participates in Mg(2+) binding. Residues 173 to 243 (TPADLARIVA…LASEALGRME (71 aa)) are small ATPAse domain (RuvB-S). The tract at residues 246–320 (ESGLDQMDRK…KAYRHLNLLG (75 aa)) is head domain (RuvB-H). Positions 301 and 306 each coordinate DNA.

Belongs to the RuvB family. Homohexamer. Forms an RuvA(8)-RuvB(12)-Holliday junction (HJ) complex. HJ DNA is sandwiched between 2 RuvA tetramers; dsDNA enters through RuvA and exits via RuvB. An RuvB hexamer assembles on each DNA strand where it exits the tetramer. Each RuvB hexamer is contacted by two RuvA subunits (via domain III) on 2 adjacent RuvB subunits; this complex drives branch migration. In the full resolvosome a probable DNA-RuvA(4)-RuvB(12)-RuvC(2) complex forms which resolves the HJ.

Its subcellular location is the cytoplasm. The enzyme catalyses ATP + H2O = ADP + phosphate + H(+). In terms of biological role, the RuvA-RuvB-RuvC complex processes Holliday junction (HJ) DNA during genetic recombination and DNA repair, while the RuvA-RuvB complex plays an important role in the rescue of blocked DNA replication forks via replication fork reversal (RFR). RuvA specifically binds to HJ cruciform DNA, conferring on it an open structure. The RuvB hexamer acts as an ATP-dependent pump, pulling dsDNA into and through the RuvAB complex. RuvB forms 2 homohexamers on either side of HJ DNA bound by 1 or 2 RuvA tetramers; 4 subunits per hexamer contact DNA at a time. Coordinated motions by a converter formed by DNA-disengaged RuvB subunits stimulates ATP hydrolysis and nucleotide exchange. Immobilization of the converter enables RuvB to convert the ATP-contained energy into a lever motion, pulling 2 nucleotides of DNA out of the RuvA tetramer per ATP hydrolyzed, thus driving DNA branch migration. The RuvB motors rotate together with the DNA substrate, which together with the progressing nucleotide cycle form the mechanistic basis for DNA recombination by continuous HJ branch migration. Branch migration allows RuvC to scan DNA until it finds its consensus sequence, where it cleaves and resolves cruciform DNA. In Nitratidesulfovibrio vulgaris (strain ATCC 29579 / DSM 644 / CCUG 34227 / NCIMB 8303 / VKM B-1760 / Hildenborough) (Desulfovibrio vulgaris), this protein is Holliday junction branch migration complex subunit RuvB.